A 366-amino-acid polypeptide reads, in one-letter code: D-alanine--D-alanine ligase A (366 aa).

Positions 145–348 (KRLLRDAGLK…YRELITALIE (204 aa)) constitute an ATP-grasp domain. An ATP-binding site is contributed by 175–230 (VEQLGLPLFVKPANQGSSVGVSKVKREADLRAALDEAFRYDHKVLVEQAVIGREIE). Mg(2+) is bound by residues Asp302, Glu315, and Asn317.

The protein belongs to the D-alanine--D-alanine ligase family. The cofactor is Mg(2+). Mn(2+) is required as a cofactor.

The protein resides in the cytoplasm. It carries out the reaction 2 D-alanine + ATP = D-alanyl-D-alanine + ADP + phosphate + H(+). It functions in the pathway cell wall biogenesis; peptidoglycan biosynthesis. Functionally, cell wall formation. This chain is D-alanine--D-alanine ligase A, found in Chromobacterium violaceum (strain ATCC 12472 / DSM 30191 / JCM 1249 / CCUG 213 / NBRC 12614 / NCIMB 9131 / NCTC 9757 / MK).